The chain runs to 199 residues: Superoxide dismutase [Mn/Fe] (199 aa).

Residues His-27, His-81, Asp-161, and His-165 each contribute to the Fe(3+) site. The Mn(2+) site is built by His-27, His-81, Asp-161, and His-165.

The protein belongs to the iron/manganese superoxide dismutase family. As to quaternary structure, homodimer. Mn(2+) is required as a cofactor. Requires Fe(3+) as cofactor.

It carries out the reaction 2 superoxide + 2 H(+) = H2O2 + O2. Functionally, destroys superoxide anion radicals which are normally produced within the cells and which are toxic to biological systems. Catalyzes the dismutation of superoxide anion radicals into O2 and H2O2 by successive reduction and oxidation of the transition metal ion at the active site. This chain is Superoxide dismutase [Mn/Fe] (sodA), found in Staphylococcus saprophyticus subsp. saprophyticus (strain ATCC 15305 / DSM 20229 / NCIMB 8711 / NCTC 7292 / S-41).